Reading from the N-terminus, the 271-residue chain is Aquaporin-2 (271 aa).

The Cytoplasmic portion of the chain corresponds to 1–11 (MWELRSIAFSR). A helical membrane pass occupies residues 12–32 (AVFAEFLATLLFVFFGLGSAL). The Extracellular segment spans residues 33-40 (NWPQALPS). The helical transmembrane segment at 41 to 59 (VLQIAMAFGLGIGTLVQAL) threads the bilayer. The Cytoplasmic segment spans residues 60-64 (GHISG). Positions 65–74 (AHINPAVTVA) form an intramembrane region, discontinuously helical. An NPA 1 motif is present at residues 68 to 70 (NPA). The Cytoplasmic portion of the chain corresponds to 75 to 85 (CLVGCHVSVLR). The helical transmembrane segment at 86-107 (AAFYVAAQLLGAVAGAALLHEI) threads the bilayer. Residues 108 to 127 (TPADIRGDLAVNALSNSTTA) are Extracellular-facing. Residue Asn-123 is glycosylated (N-linked (GlcNAc...) asparagine). The helical transmembrane segment at 128 to 148 (GQAVTVELFLTLQLVLCIFAS) threads the bilayer. The Cytoplasmic segment spans residues 149–156 (TDERRGEN). A helical membrane pass occupies residues 157-176 (PGTPALSIGFSVALGHLLGI). The Extracellular segment spans residues 177-180 (HYTG). The segment at residues 181–193 (CSMNPARSLAPAV) is an intramembrane region (discontinuously helical). Positions 184 to 186 (NPA) match the NPA 2 motif. Topologically, residues 194 to 201 (VTGKFDDH) are extracellular. The chain crosses the membrane as a helical span at residues 202–222 (WVFWIGPLVGAILGSLLYNYV). Residues 223 to 271 (LFPPAKSLSERLAVLKGLEPDTDWEEREVRRRQSVELHSPQSLPRGTKA) are Cytoplasmic-facing. The segment at 248–271 (EREVRRRQSVELHSPQSLPRGTKA) is disordered. Ser-256 is modified (phosphoserine; by PKA). The span at 261 to 271 (SPQSLPRGTKA) shows a compositional bias: polar residues.

It belongs to the MIP/aquaporin (TC 1.A.8) family. As to quaternary structure, homotetramer. Interacts with micropeptide MIAC; the interaction leads to a reduction of filamentous actin fibers and inhibition of the EREG/EGFR signaling pathway. In terms of processing, ser-256 phosphorylation is necessary and sufficient for expression at the apical membrane. Endocytosis is not phosphorylation-dependent. N-glycosylated. As to expression, expressed in collecting tubules in kidney medulla (at protein level). Detected in kidney.

Its subcellular location is the apical cell membrane. The protein resides in the basolateral cell membrane. The protein localises to the cell membrane. It localises to the cytoplasmic vesicle membrane. It is found in the golgi apparatus. Its subcellular location is the trans-Golgi network membrane. The enzyme catalyses H2O(in) = H2O(out). It catalyses the reaction glycerol(in) = glycerol(out). Its function is as follows. Forms a water-specific channel that provides the plasma membranes of renal collecting duct with high permeability to water, thereby permitting water to move in the direction of an osmotic gradient. Plays an essential role in renal water homeostasis. Could also be permeable to glycerol. In Homo sapiens (Human), this protein is Aquaporin-2.